The chain runs to 381 residues: Chaperone protein DnaJ (381 aa).

The J domain occupies 5-70 (DFYEVLGVSR…QKKAAYDQYG (66 aa)). The CR-type zinc finger occupies 136–214 (GVSKEIEVPT…CHGQGRKQKT (79 aa)). Residues Cys-149, Cys-152, Cys-166, Cys-169, Cys-188, Cys-191, Cys-202, and Cys-205 each coordinate Zn(2+). CXXCXGXG motif repeat units follow at residues 149-156 (CDICDGSG), 166-173 (CGTCHGHG), 188-195 (CPTCNGKG), and 202-209 (CNSCHGQG).

Belongs to the DnaJ family. In terms of assembly, homodimer. Zn(2+) is required as a cofactor.

The protein resides in the cytoplasm. Participates actively in the response to hyperosmotic and heat shock by preventing the aggregation of stress-denatured proteins and by disaggregating proteins, also in an autonomous, DnaK-independent fashion. Unfolded proteins bind initially to DnaJ; upon interaction with the DnaJ-bound protein, DnaK hydrolyzes its bound ATP, resulting in the formation of a stable complex. GrpE releases ADP from DnaK; ATP binding to DnaK triggers the release of the substrate protein, thus completing the reaction cycle. Several rounds of ATP-dependent interactions between DnaJ, DnaK and GrpE are required for fully efficient folding. Also involved, together with DnaK and GrpE, in the DNA replication of plasmids through activation of initiation proteins. The protein is Chaperone protein DnaJ of Vibrio atlanticus (strain LGP32) (Vibrio splendidus (strain Mel32)).